A 171-amino-acid polypeptide reads, in one-letter code: S-ribosylhomocysteine lyase (171 aa).

Positions 54, 58, and 128 each coordinate Fe cation.

Belongs to the LuxS family. In terms of assembly, homodimer. It depends on Fe cation as a cofactor.

It carries out the reaction S-(5-deoxy-D-ribos-5-yl)-L-homocysteine = (S)-4,5-dihydroxypentane-2,3-dione + L-homocysteine. Its function is as follows. Involved in the synthesis of autoinducer 2 (AI-2) which is secreted by bacteria and is used to communicate both the cell density and the metabolic potential of the environment. The regulation of gene expression in response to changes in cell density is called quorum sensing. Catalyzes the transformation of S-ribosylhomocysteine (RHC) to homocysteine (HC) and 4,5-dihydroxy-2,3-pentadione (DPD). This chain is S-ribosylhomocysteine lyase, found in Photorhabdus laumondii subsp. laumondii (strain DSM 15139 / CIP 105565 / TT01) (Photorhabdus luminescens subsp. laumondii).